The sequence spans 714 residues: Ribonucleoside-diphosphate reductase 2 subunit alpha (714 aa).

Substrate contacts are provided by residues Thr161, 177-178, Gly206, 386-390, and 588-592; these read SC, NLCSE, and PTGSI. The cysteines at positions 178 and 415 are disulfide-linked. Asn386 (proton acceptor) is an active-site residue. Cys388 (cysteine radical intermediate) is an active-site residue. Glu390 (proton acceptor) is an active-site residue.

The protein belongs to the ribonucleoside diphosphate reductase large chain family. As to quaternary structure, tetramer of two alpha and two beta subunits.

It catalyses the reaction a 2'-deoxyribonucleoside 5'-diphosphate + [thioredoxin]-disulfide + H2O = a ribonucleoside 5'-diphosphate + [thioredoxin]-dithiol. Its activity is regulated as follows. Under complex allosteric control mediated by deoxynucleoside triphosphates and ATP binding. The type of nucleotide bound at the specificity site determines substrate preference. It seems probable that ATP makes the enzyme reduce CDP and UDP, dGTP favors ADP reduction and dTTP favors GDP reduction. Lacks the N-terminal activity site. In terms of biological role, provides the precursors necessary for DNA synthesis. Catalyzes the biosynthesis of deoxyribonucleotides from the corresponding ribonucleotides. R1E contains the binding sites for both substrates and allosteric effectors and carries out the actual reduction of the ribonucleotide. The sequence is that of Ribonucleoside-diphosphate reductase 2 subunit alpha (nrdE) from Salmonella typhimurium (strain LT2 / SGSC1412 / ATCC 700720).